A 194-amino-acid chain; its full sequence is Thymidine kinase (194 aa).

Residues 15-22 (GSMFSGKS) and 88-91 (DEVQ) each bind ATP. The Proton acceptor role is filled by Glu-89. Positions 145, 148, 183, and 186 each coordinate Zn(2+).

Belongs to the thymidine kinase family. As to quaternary structure, homotetramer.

It localises to the cytoplasm. It carries out the reaction thymidine + ATP = dTMP + ADP + H(+). The sequence is that of Thymidine kinase from Bacillus cereus (strain AH820).